We begin with the raw amino-acid sequence, 455 residues long: Ribulose bisphosphate carboxylase large chain (455 aa).

Lysine 5 is subject to N6,N6,N6-trimethyllysine. 2 residues coordinate substrate: asparagine 114 and threonine 164. Lysine 166 functions as the Proton acceptor in the catalytic mechanism. Lysine 168 serves as a coordination point for substrate. Mg(2+)-binding residues include lysine 192, aspartate 194, and glutamate 195. Lysine 192 carries the N6-carboxylysine modification. Histidine 285 acts as the Proton acceptor in catalysis. Residues arginine 286, histidine 318, and serine 370 each contribute to the substrate site.

The protein belongs to the RuBisCO large chain family. Type I subfamily. Heterohexadecamer of 8 large chains and 8 small chains; disulfide-linked. The disulfide link is formed within the large subunit homodimers. It depends on Mg(2+) as a cofactor. In terms of processing, the disulfide bond which can form in the large chain dimeric partners within the hexadecamer appears to be associated with oxidative stress and protein turnover.

It is found in the plastid. Its subcellular location is the chloroplast. The catalysed reaction is 2 (2R)-3-phosphoglycerate + 2 H(+) = D-ribulose 1,5-bisphosphate + CO2 + H2O. It carries out the reaction D-ribulose 1,5-bisphosphate + O2 = 2-phosphoglycolate + (2R)-3-phosphoglycerate + 2 H(+). RuBisCO catalyzes two reactions: the carboxylation of D-ribulose 1,5-bisphosphate, the primary event in carbon dioxide fixation, as well as the oxidative fragmentation of the pentose substrate in the photorespiration process. Both reactions occur simultaneously and in competition at the same active site. This Lupinus latifolius (Broad-leaved lupine) protein is Ribulose bisphosphate carboxylase large chain.